We begin with the raw amino-acid sequence, 260 residues long: Snake venom serine protease homolog (260 aa).

The signal sequence occupies residues 1–18 (MVLIRVLANLLILQLSYA). The propeptide occupies 19–24 (QKASEL). In terms of domain architecture, Peptidase S1 spans 25–251 (IIGGDECNIN…YTEWIRSIIA (227 aa)). Disulfide bonds link Cys-31-Cys-165, Cys-52-Cys-68, Cys-100-Cys-258, Cys-144-Cys-212, Cys-176-Cys-191, and Cys-202-Cys-227. Asn-83 is a glycosylation site (N-linked (GlcNAc...) asparagine).

Belongs to the peptidase S1 family. Snake venom subfamily. In terms of tissue distribution, expressed by the venom gland.

The protein localises to the secreted. Snake venom serine protease homolog that may act in the hemostasis system of the prey. This Bothrops jararacussu (Jararacussu) protein is Snake venom serine protease homolog.